A 275-amino-acid chain; its full sequence is Light-independent protochlorophyllide reductase iron-sulfur ATP-binding protein (275 aa).

ATP-binding positions include 12–17 (GIGKST) and K41. S16 is a binding site for Mg(2+). [4Fe-4S] cluster contacts are provided by C97 and C131. 182–183 (NR) is a binding site for ATP.

This sequence belongs to the NifH/BchL/ChlL family. In terms of assembly, homodimer. Protochlorophyllide reductase is composed of three subunits; BchL, BchN and BchB. Requires [4Fe-4S] cluster as cofactor.

It carries out the reaction chlorophyllide a + oxidized 2[4Fe-4S]-[ferredoxin] + 2 ADP + 2 phosphate = protochlorophyllide a + reduced 2[4Fe-4S]-[ferredoxin] + 2 ATP + 2 H2O. It functions in the pathway porphyrin-containing compound metabolism; bacteriochlorophyll biosynthesis (light-independent). Its function is as follows. Component of the dark-operative protochlorophyllide reductase (DPOR) that uses Mg-ATP and reduced ferredoxin to reduce ring D of protochlorophyllide (Pchlide) to form chlorophyllide a (Chlide). This reaction is light-independent. The L component serves as a unique electron donor to the NB-component of the complex, and binds Mg-ATP. The chain is Light-independent protochlorophyllide reductase iron-sulfur ATP-binding protein from Pelodictyon phaeoclathratiforme (strain DSM 5477 / BU-1).